Reading from the N-terminus, the 494-residue chain is Glycerol kinase (494 aa).

T13 is an ADP binding site. ATP-binding residues include T13, T14, and S15. A sn-glycerol 3-phosphate-binding site is contributed by T13. R17 contributes to the ADP binding site. R83, E84, Y135, and D244 together coordinate sn-glycerol 3-phosphate. Glycerol is bound by residues R83, E84, Y135, D244, and Q245. ADP-binding residues include T266 and G309. Residues T266, G309, Q313, and G410 each contribute to the ATP site. Residues G410 and N414 each coordinate ADP.

The protein belongs to the FGGY kinase family.

It carries out the reaction glycerol + ATP = sn-glycerol 3-phosphate + ADP + H(+). It participates in polyol metabolism; glycerol degradation via glycerol kinase pathway; sn-glycerol 3-phosphate from glycerol: step 1/1. With respect to regulation, inhibited by fructose 1,6-bisphosphate (FBP). Functionally, key enzyme in the regulation of glycerol uptake and metabolism. Catalyzes the phosphorylation of glycerol to yield sn-glycerol 3-phosphate. This is Glycerol kinase from Shewanella sp. (strain ANA-3).